A 467-amino-acid chain; its full sequence is Cytochrome P450 monooxygenase azaI (467 aa).

The signal sequence occupies residues 1 to 28 (MESLAQLPGIFLPLAGCVLALSLSALLA). Cysteine 411 provides a ligand contact to heme.

This sequence belongs to the cytochrome P450 family. Heme is required as a cofactor.

Its pathway is secondary metabolite biosynthesis. Functionally, cytochrome P450 monooxygenase; part of the gene cluster that mediates the biosynthesis of azaphilones, a class of fungal metabolites characterized by a highly oxygenated pyrano-quinone bicyclic core and exhibiting a broad range of bioactivities. In the first step, the non-reducing polyketide synthase azaA forms the hexaketide precursor from successive condensations of five malonyl-CoA units, presumably with a simple acetyl-CoA starter unit. The reactive polyketide chain then undergoes a PT-mediated C2-C7 cyclization to afford the aromatic ring and is eventually released as an aldehyde through the R-domain. The putative ketoreductase azaE is proposed to catalyze the reduction of the terminal ketone resulting in the early culture product FK17-P2a. The monooxygenase azaH was demonstrated to be the only enzyme required to convert FK17-P2a to azanigerone E. AzaH first hydroxylates the benzaldehyde intermediate FK17-P2a at C4, which triggers the formation of the pyran-ring to afford azanigerone E. In parallel, the 2,4-dimethylhexanoyl chain is synthesized by the HR-PKS azaB and is proposed to be transferred to the C4-hydroxyl of azanigerone E by the acyltransferase azaD directly from the ACP domain of azaB. Alternatively, the 2,4-dimethyl-hexanoyl chain may be offloaded from the HR-PKS as a carboxylic acid and converted to an acyl-CoA by azaF. The resulting acyl-CoA molecule could then be taken up as a substrate by AzaD to form azanigerone B. To yield the carboxylic acid substituent in azanigerone A, the hydroxypropyl side chain of azanigerone B would need to undergo a C-C oxidative cleavage catalyzed by cytochrome P450 AzaI. AzaI is proposed to act on a vicinal diol that leads to a C-C bond scission either through an alkoxyradical intermediate or a peroxy complex. In the biosynthesis of azanigerone A, azanigerone B first undergoes hydroxylation at C10, possibly catalyzed by one of the two FAD-dependent monooxygenases encoded in the cluster, azaG or azaL, resulting in the vicinal diol azanigerone C. Oxidative cleavage of azanigerone C by azaI would yield the corresponding aldehyde derivative of azanigerone A. Finally, the dehydrogenase azaJ is proposed to convert the aldehyde functional group into the carboxylic acid, completing the conversion from azanigerone B to azanigerone A. Alternatively, the oxidation of aldehyde to carboxylic acid may be catalyzed by the same P450 enzyme azaI via consecutive oxidation or by endogenous alcohol dehydrogenase. In Aspergillus niger (strain ATCC 1015 / CBS 113.46 / FGSC A1144 / LSHB Ac4 / NCTC 3858a / NRRL 328 / USDA 3528.7), this protein is Cytochrome P450 monooxygenase azaI.